The primary structure comprises 360 residues: DNA replication and repair protein RecF (360 aa).

G30–T37 lines the ATP pocket.

The protein belongs to the RecF family.

It is found in the cytoplasm. Functionally, the RecF protein is involved in DNA metabolism; it is required for DNA replication and normal SOS inducibility. RecF binds preferentially to single-stranded, linear DNA. It also seems to bind ATP. This Shewanella loihica (strain ATCC BAA-1088 / PV-4) protein is DNA replication and repair protein RecF.